The sequence spans 85 residues: Large ribosomal subunit protein bL27 (85 aa).

The tract at residues 1–26 (MAHKKAGGSTRNGRDSESKRLGVKRF) is disordered.

It belongs to the bacterial ribosomal protein bL27 family.

This Saccharophagus degradans (strain 2-40 / ATCC 43961 / DSM 17024) protein is Large ribosomal subunit protein bL27.